A 67-amino-acid polypeptide reads, in one-letter code: Probable Sec-independent protein translocase protein TatE (67 aa).

Residues 1 to 21 form a helical membrane-spanning segment; that stretch reads MEGISIAKLLIIGALIVLLFG. The tract at residues 44-67 is disordered; it reads KDEDTSAARTTAEETPAERVSHKD.

The protein belongs to the TatA/E family. TatE subfamily.

It localises to the cell inner membrane. Functionally, part of the twin-arginine translocation (Tat) system that transports large folded proteins containing a characteristic twin-arginine motif in their signal peptide across membranes. TatE shares overlapping functions with TatA. This Pantoea ananatis (strain LMG 20103) protein is Probable Sec-independent protein translocase protein TatE.